A 176-amino-acid polypeptide reads, in one-letter code: RNA 2',3'-cyclic phosphodiesterase (176 aa).

His43 serves as the catalytic Proton donor. Short sequence motifs (HXTX) lie at residues 43 to 46 and 125 to 128; these read HLTL and HITL. His125 functions as the Proton acceptor in the catalytic mechanism.

Belongs to the 2H phosphoesterase superfamily. ThpR family. As to quaternary structure, monomer.

It catalyses the reaction a 3'-end 2',3'-cyclophospho-ribonucleotide-RNA + H2O = a 3'-end 2'-phospho-ribonucleotide-RNA + H(+). Functionally, hydrolyzes RNA 2',3'-cyclic phosphodiester to an RNA 2'-phosphomonoester. In vitro, can also ligate 5' and 3' half-tRNA molecules with 2',3'-cyclic phosphate and 5'-hydroxyl termini, respectively, to the product containing the 2'-5' phosphodiester linkage. This reaction does not require ATP and is reversible. This Escherichia coli (strain K12) protein is RNA 2',3'-cyclic phosphodiesterase.